A 396-amino-acid chain; its full sequence is Tryptophan synthase beta chain (396 aa).

Lys86 is modified (N6-(pyridoxal phosphate)lysine).

The protein belongs to the TrpB family. Tetramer of two alpha and two beta chains. Pyridoxal 5'-phosphate serves as cofactor.

The enzyme catalyses (1S,2R)-1-C-(indol-3-yl)glycerol 3-phosphate + L-serine = D-glyceraldehyde 3-phosphate + L-tryptophan + H2O. It functions in the pathway amino-acid biosynthesis; L-tryptophan biosynthesis; L-tryptophan from chorismate: step 5/5. In terms of biological role, the beta subunit is responsible for the synthesis of L-tryptophan from indole and L-serine. The polypeptide is Tryptophan synthase beta chain (Aliivibrio salmonicida (strain LFI1238) (Vibrio salmonicida (strain LFI1238))).